A 590-amino-acid polypeptide reads, in one-letter code: ATP-dependent lipid A-core flippase (590 aa).

The next 6 helical transmembrane spans lie at I31–K51, A74–L94, A132–V152, V159–I179, V259–A279, and I286–L306. In terms of domain architecture, ABC transmembrane type-1 spans I33–R315. One can recognise an ABC transporter domain in the interval L347–I585. G381 to T388 contributes to the ATP binding site.

This sequence belongs to the ABC transporter superfamily. Lipid exporter (TC 3.A.1.106) family. As to quaternary structure, homodimer.

The protein localises to the cell inner membrane. It catalyses the reaction ATP + H2O + lipid A-core oligosaccharideSide 1 = ADP + phosphate + lipid A-core oligosaccharideSide 2.. Its function is as follows. Involved in lipopolysaccharide (LPS) biosynthesis. Translocates lipid A-core from the inner to the outer leaflet of the inner membrane. Transmembrane domains (TMD) form a pore in the inner membrane and the ATP-binding domain (NBD) is responsible for energy generation. This chain is ATP-dependent lipid A-core flippase, found in Cupriavidus pinatubonensis (strain JMP 134 / LMG 1197) (Cupriavidus necator (strain JMP 134)).